A 164-amino-acid chain; its full sequence is Osteocalcin 2b (164 aa).

The signal sequence occupies residues Met1–Ser18. A propeptide spanning residues Met19 to Arg115 is cleaved from the precursor. The segment covering Pro30–Ala95 has biased composition (low complexity). The disordered stretch occupies residues Pro30 to Glu99. The Gla domain maps to Gln128–Gly160. Residues Glu130, Glu134, and Glu137 each contribute to the Ca(2+) site. 4-carboxyglutamate occurs at positions 130, 134, and 137. Residues Cys136 and Cys142 are joined by a disulfide bond.

Belongs to the osteocalcin/matrix Gla protein family. Post-translationally, gamma-carboxyglutamate residues are formed by vitamin K dependent carboxylation. These residues are essential for the binding of calcium.

It is found in the secreted. Binds strongly to apatite and calcium. The sequence is that of Osteocalcin 2b from Oncorhynchus mykiss (Rainbow trout).